The sequence spans 384 residues: Polar flagellin C (384 aa).

The stretch at 317–347 (AKQNRLSHSINNLANIQENVDASNSRIKDTD) forms a coiled coil.

It belongs to the bacterial flagellin family. Heteromer of multiple flagellin subunits including FlaA, FlaB/D, FlaC, FlaE and FlaF. Homomer of FlaC is not able to form a functional filament.

Its subcellular location is the secreted. It localises to the bacterial flagellum. Functionally, flagellin is the subunit protein which polymerizes to form the filaments of bacterial flagella. FlaC is not essential for polar flagellar synthesis and swimming motility. Homomer of FlaC is not able to form a functional filament. In Vibrio parahaemolyticus serotype O3:K6 (strain RIMD 2210633), this protein is Polar flagellin C (flaC).